Reading from the N-terminus, the 396-residue chain is Elongation factor Tu (396 aa).

The region spanning lysine 10–glutamate 206 is the tr-type G domain. A G1 region spans residues glycine 19–threonine 26. Glycine 19 to threonine 26 serves as a coordination point for GTP. Residue threonine 26 participates in Mg(2+) binding. The segment at glycine 60–asparagine 64 is G2. The segment at aspartate 81–glycine 84 is G3. GTP contacts are provided by residues aspartate 81–histidine 85 and asparagine 136–aspartate 139. The tract at residues asparagine 136–aspartate 139 is G4. A G5 region spans residues serine 174–leucine 176.

Belongs to the TRAFAC class translation factor GTPase superfamily. Classic translation factor GTPase family. EF-Tu/EF-1A subfamily. As to quaternary structure, monomer.

The protein localises to the cytoplasm. It carries out the reaction GTP + H2O = GDP + phosphate + H(+). Functionally, GTP hydrolase that promotes the GTP-dependent binding of aminoacyl-tRNA to the A-site of ribosomes during protein biosynthesis. The sequence is that of Elongation factor Tu from Dechloromonas aromatica (strain RCB).